The sequence spans 166 residues: 2-C-methyl-D-erythritol 2,4-cyclodiphosphate synthase (166 aa).

A divalent metal cation contacts are provided by aspartate 15 and histidine 17. Residues 15–17 (DVH) and 43–44 (HS) each bind 4-CDP-2-C-methyl-D-erythritol 2-phosphate. Histidine 51 provides a ligand contact to a divalent metal cation. 4-CDP-2-C-methyl-D-erythritol 2-phosphate contacts are provided by residues 65-67 (DIG), 141-144 (TTNE), and arginine 151.

It belongs to the IspF family. Homotrimer. A divalent metal cation is required as a cofactor.

It carries out the reaction 4-CDP-2-C-methyl-D-erythritol 2-phosphate = 2-C-methyl-D-erythritol 2,4-cyclic diphosphate + CMP. It participates in isoprenoid biosynthesis; isopentenyl diphosphate biosynthesis via DXP pathway; isopentenyl diphosphate from 1-deoxy-D-xylulose 5-phosphate: step 4/6. Involved in the biosynthesis of isopentenyl diphosphate (IPP) and dimethylallyl diphosphate (DMAPP), two major building blocks of isoprenoid compounds. Catalyzes the conversion of 4-diphosphocytidyl-2-C-methyl-D-erythritol 2-phosphate (CDP-ME2P) to 2-C-methyl-D-erythritol 2,4-cyclodiphosphate (ME-CPP) with a corresponding release of cytidine 5-monophosphate (CMP). In Synechococcus sp. (strain CC9311), this protein is 2-C-methyl-D-erythritol 2,4-cyclodiphosphate synthase.